A 439-amino-acid chain; its full sequence is Vitellogenin-1 (439 aa).

The N-terminal stretch at 1–20 (MNPMRVLSLLACLAVAALAK) is a signal peptide. Over residues 158 to 175 (QQQRQHGKNGNQDYQDQS) the composition is skewed to polar residues. Disordered stretches follow at residues 158 to 196 (QQQR…EVKN) and 407 to 439 (KSPF…KDYQ). At Y171 the chain carries Phosphotyrosine. A phosphoserine mark is found at S175, S185, and S186. Y190 is modified (phosphotyrosine). S191 carries the phosphoserine modification. Residues 416-433 (AQKQSSYHGVHQAWNTNQ) are compositionally biased toward polar residues. Residue S435 is modified to Phosphoserine.

This sequence belongs to the AB hydrolase superfamily. Lipase family. Tyrosine sulfation occurs in the female only and plays an essential functional role. In terms of tissue distribution, expressed in females only.

The protein localises to the secreted. Its subcellular location is the vesicle. In terms of biological role, vitellogenin is the major yolk protein of eggs where it is used as a food source during embryogenesis. Along with Yp2 and Yp3, and their receptor yl/yolkless, required for maintenance of microtubule plus-end orientation towards the posterior pole of oocytes. Involved in polarized localization of germ plasm components, such as osk mRNA and vas protein, to the oocyte posterior cortex. Receptor-mediated endocytosis by yl/yolkless is crucial for actin reorganization, mediated by osk isoform A/Long, required to anchor germ plasm components to the oocyte cortex. The sequence is that of Vitellogenin-1 (Yp1) from Drosophila melanogaster (Fruit fly).